The primary structure comprises 185 residues: Large ribosomal subunit protein uL22 (185 aa).

This sequence belongs to the universal ribosomal protein uL22 family. As to quaternary structure, component of the large ribosomal subunit. Mature ribosomes consist of a small (40S) and a large (60S) subunit. The 40S subunit contains about 32 different proteins and 1 molecule of RNA (18S). The 60S subunit contains 45 different proteins and 3 molecules of RNA (25S, 5.8S and 5S).

The protein localises to the cytoplasm. In terms of biological role, component of the ribosome, a large ribonucleoprotein complex responsible for the synthesis of proteins in the cell. The small ribosomal subunit (SSU) binds messenger RNAs (mRNAs) and translates the encoded message by selecting cognate aminoacyl-transfer RNA (tRNA) molecules. The large subunit (LSU) contains the ribosomal catalytic site termed the peptidyl transferase center (PTC), which catalyzes the formation of peptide bonds, thereby polymerizing the amino acids delivered by tRNAs into a polypeptide chain. The nascent polypeptides leave the ribosome through a tunnel in the LSU and interact with protein factors that function in enzymatic processing, targeting, and the membrane insertion of nascent chains at the exit of the ribosomal tunnel. This is Large ribosomal subunit protein uL22 from Candida albicans (strain SC5314 / ATCC MYA-2876) (Yeast).